Reading from the N-terminus, the 323-residue chain is Aspartate carbamoyltransferase catalytic subunit (323 aa).

Residues Arg-68 and Thr-69 each coordinate carbamoyl phosphate. An L-aspartate-binding site is contributed by Lys-96. Residues Arg-118, His-148, and Gln-151 each coordinate carbamoyl phosphate. Positions 181 and 236 each coordinate L-aspartate. The carbamoyl phosphate site is built by Gly-277 and Pro-278.

It belongs to the aspartate/ornithine carbamoyltransferase superfamily. ATCase family. Heterododecamer (2C3:3R2) of six catalytic PyrB chains organized as two trimers (C3), and six regulatory PyrI chains organized as three dimers (R2).

It catalyses the reaction carbamoyl phosphate + L-aspartate = N-carbamoyl-L-aspartate + phosphate + H(+). It participates in pyrimidine metabolism; UMP biosynthesis via de novo pathway; (S)-dihydroorotate from bicarbonate: step 2/3. In terms of biological role, catalyzes the condensation of carbamoyl phosphate and aspartate to form carbamoyl aspartate and inorganic phosphate, the committed step in the de novo pyrimidine nucleotide biosynthesis pathway. This Verminephrobacter eiseniae (strain EF01-2) protein is Aspartate carbamoyltransferase catalytic subunit.